A 3133-amino-acid polypeptide reads, in one-letter code: Probable polyketide synthase 38 (3133 aa).

Positions 9 to 440 constitute a Ketosynthase family 3 (KS3) domain; it reads DDDVAVIGIG…GSNVCLILSE (432 aa). Active-site for beta-ketoacyl synthase activity residues include C181, H320, and H363. The segment at 647-680 is acyl/malonyl transferase; sequence GVSADIIIGHSLGEISSAYCSGMIDFQTLCYLTY. The active-site For acyl/malonyl transferase activity is S657. Positions 945-1067 are N-terminal hotdog fold; the sequence is GPSIHSLGNN…GNFSLSKHNI (123 aa). The 304-residue stretch at 945-1248 folds into the PKS/mFAS DH domain; it reads GPSIHSLGNN…CTIVASNPDS (304 aa). H979 serves as the catalytic Proton acceptor; for dehydratase activity. A C-terminal hotdog fold region spans residues 1083–1248; sequence NFTCISKQDL…CTIVASNPDS (166 aa). Residue D1155 is the Proton donor; for dehydratase activity of the active site. Residues 1370–1408 are disordered; the sequence is NNNNNNNNNNNNNNNNNNNNNNNNNNNNNNNNNDNDNDN. The Carrier domain occupies 2562 to 2639; the sequence is NNNEIIRSTI…QSIEIIKSAH (78 aa). At S2599 the chain carries O-(pantetheine 4'-phosphoryl)serine. Positions 2649–2711 form a coiled coil; that stretch reads NNNNSNHHDN…NNNNNNNNNN (63 aa). Disordered regions lie at residues 2691–2715 and 2794–2817; these read LNNN…NNNN and GNIS…NNNQ. 2 stretches are compositionally biased toward low complexity: residues 2692–2715 and 2795–2817; these read NNNN…NNNN and NISN…NNNQ.

Requires pantetheine 4'-phosphate as cofactor.

Probable polyketide synthase. This is Probable polyketide synthase 38 (pks38) from Dictyostelium discoideum (Social amoeba).